Here is a 108-residue protein sequence, read N- to C-terminus: Small ribosomal subunit protein bS6 (108 aa).

It belongs to the bacterial ribosomal protein bS6 family.

In terms of biological role, binds together with bS18 to 16S ribosomal RNA. This Nostoc sp. (strain PCC 7120 / SAG 25.82 / UTEX 2576) protein is Small ribosomal subunit protein bS6.